Consider the following 729-residue polypeptide: 1,4-alpha-glucan branching enzyme GlgB (729 aa).

The Nucleophile role is filled by Asp408. The Proton donor role is filled by Glu461.

The protein belongs to the glycosyl hydrolase 13 family. GlgB subfamily. In terms of assembly, monomer.

The enzyme catalyses Transfers a segment of a (1-&gt;4)-alpha-D-glucan chain to a primary hydroxy group in a similar glucan chain.. It participates in glycan biosynthesis; glycogen biosynthesis. In terms of biological role, catalyzes the formation of the alpha-1,6-glucosidic linkages in glycogen by scission of a 1,4-alpha-linked oligosaccharide from growing alpha-1,4-glucan chains and the subsequent attachment of the oligosaccharide to the alpha-1,6 position. The chain is 1,4-alpha-glucan branching enzyme GlgB from Vibrio cholerae serotype O1 (strain ATCC 39315 / El Tor Inaba N16961).